The following is a 390-amino-acid chain: Bifunctional enzyme IspD/IspF (390 aa).

Residues 1–229 are 2-C-methyl-D-erythritol 4-phosphate cytidylyltransferase; the sequence is MAAGRGERAG…RQDHAVFPDI (229 aa). The tract at residues 230–390 is 2-C-methyl-D-erythritol 2,4-cyclodiphosphate synthase; it reads RTGNGYDVHS…TVIYPGEVPE (161 aa). D236 and H238 together coordinate a divalent metal cation. Residues 236-238 and 262-263 contribute to the 4-CDP-2-C-methyl-D-erythritol 2-phosphate site; these read DVH and HS. H270 serves as a coordination point for a divalent metal cation. 4-CDP-2-C-methyl-D-erythritol 2-phosphate is bound by residues 284–286, 360–363, F367, and R370; these read DIG and TTNE.

It in the N-terminal section; belongs to the IspD/TarI cytidylyltransferase family. IspD subfamily. The protein in the C-terminal section; belongs to the IspF family. It depends on a divalent metal cation as a cofactor.

The catalysed reaction is 2-C-methyl-D-erythritol 4-phosphate + CTP + H(+) = 4-CDP-2-C-methyl-D-erythritol + diphosphate. It catalyses the reaction 4-CDP-2-C-methyl-D-erythritol 2-phosphate = 2-C-methyl-D-erythritol 2,4-cyclic diphosphate + CMP. It participates in isoprenoid biosynthesis; isopentenyl diphosphate biosynthesis via DXP pathway; isopentenyl diphosphate from 1-deoxy-D-xylulose 5-phosphate: step 2/6. Its pathway is isoprenoid biosynthesis; isopentenyl diphosphate biosynthesis via DXP pathway; isopentenyl diphosphate from 1-deoxy-D-xylulose 5-phosphate: step 4/6. Its function is as follows. Bifunctional enzyme that catalyzes the formation of 4-diphosphocytidyl-2-C-methyl-D-erythritol from CTP and 2-C-methyl-D-erythritol 4-phosphate (MEP) (IspD), and catalyzes the conversion of 4-diphosphocytidyl-2-C-methyl-D-erythritol 2-phosphate (CDP-ME2P) to 2-C-methyl-D-erythritol 2,4-cyclodiphosphate (ME-CPP) with a corresponding release of cytidine 5-monophosphate (CMP) (IspF). The polypeptide is Bifunctional enzyme IspD/IspF (Brucella abortus biovar 1 (strain 9-941)).